Reading from the N-terminus, the 929-residue chain is Isoleucine--tRNA ligase (929 aa).

Residues 58–68 carry the 'HIGH' region motif; that stretch reads PYANGDIHIGH. An L-isoleucyl-5'-AMP-binding site is contributed by Glu-563. The 'KMSKS' region motif lies at 605–609; that stretch reads KMSKS. Lys-608 is a binding site for ATP. Residues Cys-892, Cys-895, Cys-912, and Cys-915 each contribute to the Zn(2+) site.

The protein belongs to the class-I aminoacyl-tRNA synthetase family. IleS type 1 subfamily. As to quaternary structure, monomer. The cofactor is Zn(2+).

It localises to the cytoplasm. It catalyses the reaction tRNA(Ile) + L-isoleucine + ATP = L-isoleucyl-tRNA(Ile) + AMP + diphosphate. Catalyzes the attachment of isoleucine to tRNA(Ile). As IleRS can inadvertently accommodate and process structurally similar amino acids such as valine, to avoid such errors it has two additional distinct tRNA(Ile)-dependent editing activities. One activity is designated as 'pretransfer' editing and involves the hydrolysis of activated Val-AMP. The other activity is designated 'posttransfer' editing and involves deacylation of mischarged Val-tRNA(Ile). This Neisseria meningitidis serogroup C / serotype 2a (strain ATCC 700532 / DSM 15464 / FAM18) protein is Isoleucine--tRNA ligase.